Here is a 150-residue protein sequence, read N- to C-terminus: UPF0098 protein CT_736 (150 aa).

Belongs to the UPF0098 family.

This Chlamydia trachomatis serovar D (strain ATCC VR-885 / DSM 19411 / UW-3/Cx) protein is UPF0098 protein CT_736.